Reading from the N-terminus, the 464-residue chain is tRNA modification GTPase MnmE (464 aa).

(6S)-5-formyl-5,6,7,8-tetrahydrofolate is bound by residues arginine 29, glutamate 91, and arginine 131. The region spanning 226–387 is the TrmE-type G domain; that stretch reads GLKVALTGKP…LINYLLKKCG (162 aa). Asparagine 236 contacts K(+). Residues 236–241, 255–261, and 280–283 contribute to the GTP site; these read NVGKSS, TDLPGTT, and DTAG. Serine 240 is a binding site for Mg(2+). Residues threonine 255, leucine 257, and threonine 260 each coordinate K(+). Threonine 261 is a Mg(2+) binding site. A (6S)-5-formyl-5,6,7,8-tetrahydrofolate-binding site is contributed by lysine 464.

It belongs to the TRAFAC class TrmE-Era-EngA-EngB-Septin-like GTPase superfamily. TrmE GTPase family. In terms of assembly, homodimer. Heterotetramer of two MnmE and two MnmG subunits. The cofactor is K(+).

Its subcellular location is the cytoplasm. In terms of biological role, exhibits a very high intrinsic GTPase hydrolysis rate. Involved in the addition of a carboxymethylaminomethyl (cmnm) group at the wobble position (U34) of certain tRNAs, forming tRNA-cmnm(5)s(2)U34. The sequence is that of tRNA modification GTPase MnmE from Prochlorococcus marinus (strain NATL2A).